We begin with the raw amino-acid sequence, 58 residues long: Putative transcript Y 13 protein (58 aa).

The helical transmembrane segment at 17–37 (LLGWDLNLSLFLGLCLMLLLA) threads the bilayer.

The protein resides in the membrane. In Homo sapiens (Human), this protein is Putative transcript Y 13 protein (TTTY13).